Here is a 429-residue protein sequence, read N- to C-terminus: MALRVTRNTKLNTENKAKVSMTGAKRVPVAIAAASKPGLRPRTALGDIGNKVSEQAQARVPLKKELKTSVTGKVSAKIPPPKPQEKVPVSEPEVELAEPEPEPEPVMEEKLSPEPILVDNPSPSPMETSGCAPAEEYLCQAFSDVILAVSDVDADDGADPNLCSEYVKDIYAYLRQLEEEQSVRPRYLLGREVTGNMRAILIDWLIQVQMKFRLLQETMYMTVSIIDRFMQDNCVPKKMLQLVGVTAMFIASKYEEMYPPEIGDFAFVTNNTYTKHQIRQMEMKILRVLNFSLGRPLPLHFLRRASKIGEVDVEQHTLAKYLMELTMLDYDMVHFAPSQIAAGAFCLALKILDNGEWTPTLQHYLSYTEESLLPVMQHLAKNVVMVNRGLTKHMTIKNKYATSKHAKISTLAQLNCTLVQNLSKAVSKA.

Polar residues predominate over residues 1 to 14 (MALRVTRNTKLNTE). Disordered regions lie at residues 1–21 (MALR…KVSM) and 71–128 (TGKV…PMET). Lys73 bears the N6-acetyllysine mark. Acidic residues predominate over residues 92–106 (PEVELAEPEPEPEPV). At Ser122 the chain carries Phosphoserine; by CDK1. Ser124 carries the post-translational modification Phosphoserine. Ser129 is subject to Phosphoserine; by PLK1. Phosphoserine is present on Ser143. Interaction with CDK2 stretches follow at residues 165–173 (EYVKDIYAY) and 254–257 (YEEM). Thr317 is subject to Phosphothreonine.

This sequence belongs to the cyclin family. Cyclin AB subfamily. As to quaternary structure, interacts with the CDC2 protein kinase to form a serine/threonine kinase holoenzyme complex also known as maturation promoting factor (MPF). The cyclin subunit imparts substrate specificity to the complex. Binds HEI10. Interacts with catalytically active RALBP1 and CDC2 during mitosis to form an endocytotic complex during interphase. Interacts with CCNF; interaction is required for nuclear localization. Interacts with CDK5RAP3. Interacts with RFPL4A and UBE2A. Interacts with INCA1. In terms of processing, ubiquitinated by the SCF(NIPA) complex during interphase, leading to its destruction. Not ubiquitinated during G2/M phases. Post-translationally, phosphorylated by PLK1 at Ser-129 on centrosomes during prophase: phosphorylation by PLK1 does not cause nuclear import. Phosphorylation at Ser-143 was also reported to be mediated by PLK1 but Ser-129 seems to be the primary phosphorylation site.

The protein localises to the cytoplasm. It is found in the nucleus. Its subcellular location is the cytoskeleton. It localises to the microtubule organizing center. The protein resides in the centrosome. Essential for the control of the cell cycle at the G2/M (mitosis) transition. This is G2/mitotic-specific cyclin-B1 (CCNB1) from Cricetulus griseus (Chinese hamster).